An 876-amino-acid chain; its full sequence is DNA mismatch repair protein MutS (876 aa).

626–633 (GPNMGGKS) is an ATP binding site.

It belongs to the DNA mismatch repair MutS family.

In terms of biological role, this protein is involved in the repair of mismatches in DNA. It is possible that it carries out the mismatch recognition step. This protein has a weak ATPase activity. This is DNA mismatch repair protein MutS from Bordetella bronchiseptica (strain ATCC BAA-588 / NCTC 13252 / RB50) (Alcaligenes bronchisepticus).